Here is a 688-residue protein sequence, read N- to C-terminus: MVLETLKQGLDSSQIHEALIQLDSYPREPVDLDASMVLIKFVIPVYPSLPERSKVILRRLASKSFTFLCQIVTFSRTISGRDGLQEIRIYQEILEDIISFEPGCLTFYLKASTTSKADRDSIKALFFGSKLFNVLANRIDMAKYLGYLRLQWKFLLESNETDPPGFLGEWLVSSFLLNPVLAADMLLGELFLLKESYFFSFQKIISASSLIDQKRLIAKFLLPYIQVIVTLENLNDVRKILRRFDLDKIISLSVLFEIQSLPLKEVIVRLMSNHSSTKFVSALVSKFADFTDEEVDTKTCELLVLFAVHNLNHSQREEIAHDERFLNGVTKHLGSNEREARERAMFIAKLLSGGHLKYESDFKINIPNVKFESNSDDKIIDFQSLKNPSICNTQTDVGKDKITEVSGHVQSLTLDCSDSDDEDENDEREIVKRIVFLKDLMKEYEKTGESRKAPLIPLLKQTVKLIRQKADFQLEVGYYAQGILSSIVCLNNEFDEPLFEQWRINALTSILVVLPEKVNGAINILFNSELSLQQRMSLLSALGLSARELRGLDDPTIVKPKFDFPTNRLPWDDQSHHNSRLVEVQESTSMIKKTKTVWKSRKLGKDREKGTQNRFRKYAGLFFYPLAHGWLNGIDVGTYNQLFKSHYLTTLRIIYSCANPVHDFESMTELMNHIISSAIEEGISLNKG.

Residues S417 and S419 each carry the phosphoserine modification.

Belongs to the TEL2 family. Component of the TTT complex composed of TEL2, TTI1 and TTI2. Interacts with TTI1 and TTI2.

It is found in the nucleus. It localises to the chromosome. The protein resides in the telomere. Functionally, part of the TTT complex that is required to stabilize protein levels of the phosphatidylinositol 3-kinase-related protein kinase (PIKK) family proteins. Required for telomere length regulation and telomere position effect. Regulates telomere length and participates in gene silencing at subtelomeric regions. Binds to telomeric DNA repeats. The chain is Telomere length regulation protein TEL2 (TEL2) from Saccharomyces cerevisiae (strain ATCC 204508 / S288c) (Baker's yeast).